The primary structure comprises 359 residues: Tyrosine-protein phosphatase non-receptor type 7 (359 aa).

The segment at 1–34 (MVQACEGRSRAQLPTLSLGADMTQPPPAKAPAKK) is disordered. An interaction with MAP kinases region spans residues 38-51 (LQERRGSSVALMLD). A Phosphoserine modification is found at Ser44. Thr66 is subject to Phosphothreonine. Phosphoserine is present on residues Ser93 and Ser143. The Tyrosine-protein phosphatase domain maps to 97 to 349 (LEEEFLKIPS…QFLHHTLALY (253 aa)). Residues Asp257, 290–296 (CSAGIGR), and Gln334 contribute to the substrate site. Catalysis depends on Cys290, which acts as the Phosphocysteine intermediate. Cys290 bears the Cysteine sulfenic acid (-SOH) mark.

It belongs to the protein-tyrosine phosphatase family. Non-receptor class subfamily. Oxidized at active site cysteine. Treatment with pervanadate (vanadate and H(2)O(2)) or with antigen enhanced oxidation of active site cysteine.

It is found in the cytoplasm. The protein resides in the cytoskeleton. It catalyses the reaction O-phospho-L-tyrosyl-[protein] + H2O = L-tyrosyl-[protein] + phosphate. With respect to regulation, inhibited in cells after FCER1A triggering. May play a role in the regulation of T and B-lymphocyte development and signal transduction. In Rattus norvegicus (Rat), this protein is Tyrosine-protein phosphatase non-receptor type 7 (Ptpn7).